We begin with the raw amino-acid sequence, 397 residues long: pH-sensitive adenylate cyclase MT1302 (397 aa).

The interval 1-191 (MTDHVREADD…IQDMLFMQLR (191 aa)) is regulatory domain. The interval 192-206 (HMMETEAVNAGERAA) is linker. Residues 211–397 (PGARQVTVAF…QDDDLAGSSP (187 aa)) are catalytic domain. Residues 217–325 (TVAFADLVGF…SPVNVASRVT (109 aa)) form the Guanylate cyclase domain. Aspartate 222 contacts Mn(2+). Substrate is bound at residue lysine 261. Aspartate 265 serves as a coordination point for Mn(2+). Arginine 298 provides a ligand contact to ATP. Aspartate 312 is a binding site for substrate.

It belongs to the adenylyl cyclase class-4/guanylyl cyclase family. Homodimer. It depends on Mn(2+) as a cofactor. Mg(2+) serves as cofactor.

The enzyme catalyses ATP = 3',5'-cyclic AMP + diphosphate. Catalyzes the formation of the second messenger cAMP. This Mycobacterium tuberculosis (strain CDC 1551 / Oshkosh) protein is pH-sensitive adenylate cyclase MT1302.